The chain runs to 575 residues: UvrABC system protein C (575 aa).

The 79-residue stretch at 16-94 (SQPGVYRMYD…IKLYQPRYNV (79 aa)) folds into the GIY-YIG domain. The UVR domain maps to 204 to 239 (DQVLTQLISRMETASQNLEFEEAARIRDQIQAVRRV).

It belongs to the UvrC family. Interacts with UvrB in an incision complex.

It localises to the cytoplasm. Functionally, the UvrABC repair system catalyzes the recognition and processing of DNA lesions. UvrC both incises the 5' and 3' sides of the lesion. The N-terminal half is responsible for the 3' incision and the C-terminal half is responsible for the 5' incision. This Shigella dysenteriae serotype 1 (strain Sd197) protein is UvrABC system protein C.